The following is a 225-amino-acid chain: Enolase-phosphatase E1 (225 aa).

This sequence belongs to the HAD-like hydrolase superfamily. MasA/MtnC family. Monomer. Requires Mg(2+) as cofactor.

The enzyme catalyses 5-methylsulfanyl-2,3-dioxopentyl phosphate + H2O = 1,2-dihydroxy-5-(methylsulfanyl)pent-1-en-3-one + phosphate. Its pathway is amino-acid biosynthesis; L-methionine biosynthesis via salvage pathway; L-methionine from S-methyl-5-thio-alpha-D-ribose 1-phosphate: step 3/6. The protein operates within amino-acid biosynthesis; L-methionine biosynthesis via salvage pathway; L-methionine from S-methyl-5-thio-alpha-D-ribose 1-phosphate: step 4/6. Bifunctional enzyme that catalyzes the enolization of 2,3-diketo-5-methylthiopentyl-1-phosphate (DK-MTP-1-P) into the intermediate 2-hydroxy-3-keto-5-methylthiopentenyl-1-phosphate (HK-MTPenyl-1-P), which is then dephosphorylated to form the acireductone 1,2-dihydroxy-3-keto-5-methylthiopentene (DHK-MTPene). In Pseudomonas aeruginosa (strain LESB58), this protein is Enolase-phosphatase E1.